The chain runs to 571 residues: Potassium-transporting ATPase potassium-binding subunit (571 aa).

11 helical membrane passes run Gly-5 to Trp-25, Leu-64 to Ile-84, Gly-136 to Ile-156, Ile-178 to Ile-198, Leu-254 to Phe-274, Trp-285 to Ala-305, Phe-330 to Val-350, Phe-357 to Val-379, Met-421 to Leu-441, Leu-488 to Gly-508, and Gly-527 to Phe-547.

Belongs to the KdpA family. The system is composed of three essential subunits: KdpA, KdpB and KdpC.

The protein resides in the cell inner membrane. Its function is as follows. Part of the high-affinity ATP-driven potassium transport (or Kdp) system, which catalyzes the hydrolysis of ATP coupled with the electrogenic transport of potassium into the cytoplasm. This subunit binds the periplasmic potassium ions and delivers the ions to the membrane domain of KdpB through an intramembrane tunnel. In Methylobacterium nodulans (strain LMG 21967 / CNCM I-2342 / ORS 2060), this protein is Potassium-transporting ATPase potassium-binding subunit.